We begin with the raw amino-acid sequence, 161 residues long: MSIITKMILNADAEVRYLTPGELDQINIFVKSSQRRLQLVEALTQSRATIVKQAGKDIFQRFPRLVAPGGNAYGENMTATCLRDMDYYLRLITYSVAAGDTTPIQEIGIVGVRQMYRSLGTPIDAVAESVRAMKNITTSMLSGEDASEVGTYFDYLITNLQ.

At N71 the chain carries N4-methylasparagine. C81 is a binding site for (2R,3E)-phycocyanobilin.

It belongs to the phycobiliprotein family. Component of the phycobilisome. Heterodimer of an alpha and a beta chain. Contains one covalently linked bilin chromophore.

It is found in the cellular thylakoid membrane. Functionally, light-harvesting photosynthetic bile pigment-protein from the phycobiliprotein complex. Allophycocyanin has a maximum absorption at approximately 650 nanometers. This chain is Allophycocyanin alpha chain 2 (apcA2), found in Microchaete diplosiphon (Fremyella diplosiphon).